Reading from the N-terminus, the 427-residue chain is 3-phosphoshikimate 1-carboxyvinyltransferase (427 aa).

3-phosphoshikimate-binding residues include lysine 22, serine 23, and arginine 27. Residue lysine 22 participates in phosphoenolpyruvate binding. Positions 96 and 124 each coordinate phosphoenolpyruvate. The 3-phosphoshikimate site is built by serine 169, serine 170, glutamine 171, serine 197, aspartate 313, asparagine 336, and lysine 340. Glutamine 171 is a binding site for phosphoenolpyruvate. The active-site Proton acceptor is the aspartate 313. Phosphoenolpyruvate contacts are provided by arginine 344, arginine 386, and lysine 411.

It belongs to the EPSP synthase family. Monomer.

It localises to the cytoplasm. It catalyses the reaction 3-phosphoshikimate + phosphoenolpyruvate = 5-O-(1-carboxyvinyl)-3-phosphoshikimate + phosphate. The protein operates within metabolic intermediate biosynthesis; chorismate biosynthesis; chorismate from D-erythrose 4-phosphate and phosphoenolpyruvate: step 6/7. Functionally, catalyzes the transfer of the enolpyruvyl moiety of phosphoenolpyruvate (PEP) to the 5-hydroxyl of shikimate-3-phosphate (S3P) to produce enolpyruvyl shikimate-3-phosphate and inorganic phosphate. The chain is 3-phosphoshikimate 1-carboxyvinyltransferase from Escherichia coli O6:H1 (strain CFT073 / ATCC 700928 / UPEC).